The chain runs to 479 residues: 6-phosphogluconate dehydrogenase, decarboxylating (479 aa).

NADP(+)-binding positions include 9–14, 32–34, 77–79, and Asn-105; these read GLGVMG, NRT, and VQA. Residues Asn-105 and 131–133 contribute to the substrate site; that span reads SGG. Catalysis depends on Lys-186, which acts as the Proton acceptor. 189-190 contributes to the substrate binding site; it reads HN. Catalysis depends on Glu-193, which acts as the Proton donor. The substrate site is built by Tyr-194, Lys-263, Arg-290, Arg-454, and His-460.

It belongs to the 6-phosphogluconate dehydrogenase family. Homodimer.

The enzyme catalyses 6-phospho-D-gluconate + NADP(+) = D-ribulose 5-phosphate + CO2 + NADPH. Its pathway is carbohydrate degradation; pentose phosphate pathway; D-ribulose 5-phosphate from D-glucose 6-phosphate (oxidative stage): step 3/3. Catalyzes the oxidative decarboxylation of 6-phosphogluconate to ribulose 5-phosphate and CO(2), with concomitant reduction of NADP to NADPH. This chain is 6-phosphogluconate dehydrogenase, decarboxylating (GND), found in Trypanosoma brucei brucei.